The primary structure comprises 231 residues: Orotidine 5'-phosphate decarboxylase (231 aa).

Residues D11, K33, D60–T69, T120, R181, Q190, G210, and R211 each bind substrate. Residue K62 is the Proton donor of the active site.

This sequence belongs to the OMP decarboxylase family. Type 1 subfamily. Homodimer.

It carries out the reaction orotidine 5'-phosphate + H(+) = UMP + CO2. It participates in pyrimidine metabolism; UMP biosynthesis via de novo pathway; UMP from orotate: step 2/2. In terms of biological role, catalyzes the decarboxylation of orotidine 5'-monophosphate (OMP) to uridine 5'-monophosphate (UMP). This chain is Orotidine 5'-phosphate decarboxylase, found in Vibrio cholerae serotype O1 (strain ATCC 39315 / El Tor Inaba N16961).